The chain runs to 451 residues: Tubulin alpha-2 chain (451 aa).

Q11 is a binding site for GTP. Position 40 is an N6-acetyllysine (K40). GTP-binding residues include E71, G144, T145, T179, N206, and N228. Residue E71 coordinates Mg(2+). E254 is an active-site residue.

Belongs to the tubulin family. As to quaternary structure, dimer of alpha and beta chains. A typical microtubule is a hollow water-filled tube with an outer diameter of 25 nm and an inner diameter of 15 nM. Alpha-beta heterodimers associate head-to-tail to form protofilaments running lengthwise along the microtubule wall with the beta-tubulin subunit facing the microtubule plus end conferring a structural polarity. Microtubules usually have 13 protofilaments but different protofilament numbers can be found in some organisms and specialized cells. Requires Mg(2+) as cofactor. Undergoes a tyrosination/detyrosination cycle, the cyclic removal and re-addition of a C-terminal tyrosine residue by the enzymes tubulin tyrosine carboxypeptidase (TTCP) and tubulin tyrosine ligase (TTL), respectively. Post-translationally, acetylation of alpha chains at Lys-40 stabilizes microtubules and affects affinity and processivity of microtubule motors. This modification has a role in multiple cellular functions, ranging from cell motility, cell cycle progression or cell differentiation to intracellular trafficking and signaling.

The protein localises to the cytoplasm. Its subcellular location is the cytoskeleton. It catalyses the reaction GTP + H2O = GDP + phosphate + H(+). Functionally, tubulin is the major constituent of microtubules, a cylinder consisting of laterally associated linear protofilaments composed of alpha- and beta-tubulin heterodimers. Microtubules grow by the addition of GTP-tubulin dimers to the microtubule end, where a stabilizing cap forms. Below the cap, tubulin dimers are in GDP-bound state, owing to GTPase activity of alpha-tubulin. This chain is Tubulin alpha-2 chain (TUBA), found in Oryza sativa subsp. japonica (Rice).